Reading from the N-terminus, the 465-residue chain is tRNA-2-methylthio-N(6)-dimethylallyladenosine synthase (465 aa).

Residues 5 to 125 enclose the MTTase N-terminal domain; the sequence is RKLHIKSFGC…LPELLEKARR (121 aa). Residues Cys14, Cys50, Cys88, Cys166, Cys170, and Cys173 each contribute to the [4Fe-4S] cluster site. One can recognise a Radical SAM core domain in the interval 152–382; the sequence is RARGVSAFVT…QLQGLIDSQQ (231 aa). The TRAM domain occupies 387 to 449; it reads RASIGTTVDV…RYSLIGELVK (63 aa).

It belongs to the methylthiotransferase family. MiaB subfamily. Monomer. [4Fe-4S] cluster is required as a cofactor.

Its subcellular location is the cytoplasm. It carries out the reaction N(6)-dimethylallyladenosine(37) in tRNA + (sulfur carrier)-SH + AH2 + 2 S-adenosyl-L-methionine = 2-methylsulfanyl-N(6)-dimethylallyladenosine(37) in tRNA + (sulfur carrier)-H + 5'-deoxyadenosine + L-methionine + A + S-adenosyl-L-homocysteine + 2 H(+). Catalyzes the methylthiolation of N6-(dimethylallyl)adenosine (i(6)A), leading to the formation of 2-methylthio-N6-(dimethylallyl)adenosine (ms(2)i(6)A) at position 37 in tRNAs that read codons beginning with uridine. In Rhodopseudomonas palustris (strain BisA53), this protein is tRNA-2-methylthio-N(6)-dimethylallyladenosine synthase.